A 379-amino-acid polypeptide reads, in one-letter code: Queuine tRNA-ribosyltransferase (379 aa).

The active-site Proton acceptor is Asp-94. Substrate is bound by residues 94-98, Asp-148, Gln-191, and Gly-218; that span reads DSGGF. The tract at residues 249–255 is RNA binding; the sequence is GVGSPDS. Asp-268 (nucleophile) is an active-site residue. Residues 273-277 are RNA binding; important for wobble base 34 recognition; that stretch reads TRIGR. Cys-306, Cys-308, Cys-311, and His-337 together coordinate Zn(2+).

The protein belongs to the queuine tRNA-ribosyltransferase family. In terms of assembly, homodimer. Within each dimer, one monomer is responsible for RNA recognition and catalysis, while the other monomer binds to the replacement base PreQ1. Zn(2+) is required as a cofactor.

It carries out the reaction 7-aminomethyl-7-carbaguanine + guanosine(34) in tRNA = 7-aminomethyl-7-carbaguanosine(34) in tRNA + guanine. The protein operates within tRNA modification; tRNA-queuosine biosynthesis. Its function is as follows. Catalyzes the base-exchange of a guanine (G) residue with the queuine precursor 7-aminomethyl-7-deazaguanine (PreQ1) at position 34 (anticodon wobble position) in tRNAs with GU(N) anticodons (tRNA-Asp, -Asn, -His and -Tyr). Catalysis occurs through a double-displacement mechanism. The nucleophile active site attacks the C1' of nucleotide 34 to detach the guanine base from the RNA, forming a covalent enzyme-RNA intermediate. The proton acceptor active site deprotonates the incoming PreQ1, allowing a nucleophilic attack on the C1' of the ribose to form the product. After dissociation, two additional enzymatic reactions on the tRNA convert PreQ1 to queuine (Q), resulting in the hypermodified nucleoside queuosine (7-(((4,5-cis-dihydroxy-2-cyclopenten-1-yl)amino)methyl)-7-deazaguanosine). The polypeptide is Queuine tRNA-ribosyltransferase (Anoxybacillus flavithermus (strain DSM 21510 / WK1)).